Reading from the N-terminus, the 323-residue chain is Phosphate acyltransferase (323 aa).

It belongs to the PlsX family. Homodimer. Probably interacts with PlsY.

It is found in the cytoplasm. The enzyme catalyses a fatty acyl-[ACP] + phosphate = an acyl phosphate + holo-[ACP]. It functions in the pathway lipid metabolism; phospholipid metabolism. Catalyzes the reversible formation of acyl-phosphate (acyl-PO(4)) from acyl-[acyl-carrier-protein] (acyl-ACP). This enzyme utilizes acyl-ACP as fatty acyl donor, but not acyl-CoA. This Finegoldia magna (strain ATCC 29328 / DSM 20472 / WAL 2508) (Peptostreptococcus magnus) protein is Phosphate acyltransferase.